The primary structure comprises 359 residues: Molybdenum import ATP-binding protein ModC (359 aa).

The ABC transporter domain maps to 1-229; it reads MLELNFSQQL…SALRPWLQRE (229 aa). 31 to 38 is an ATP binding site; sequence GLSGAGKT. Residues 289-354 enclose the Mop domain; it reads SSSIRNILPV…IKSVSFNRQN (66 aa).

It belongs to the ABC transporter superfamily. Molybdate importer (TC 3.A.1.8) family. The complex is composed of two ATP-binding proteins (ModC), two transmembrane proteins (ModB) and a solute-binding protein (ModA).

It is found in the cell inner membrane. The enzyme catalyses molybdate(out) + ATP + H2O = molybdate(in) + ADP + phosphate + H(+). Functionally, part of the ABC transporter complex ModABC involved in molybdenum import. Responsible for energy coupling to the transport system. This Yersinia pestis bv. Antiqua (strain Antiqua) protein is Molybdenum import ATP-binding protein ModC.